A 193-amino-acid polypeptide reads, in one-letter code: Leucyl/phenylalanyl-tRNA--protein transferase (193 aa).

It belongs to the L/F-transferase family.

Its subcellular location is the cytoplasm. The catalysed reaction is N-terminal L-lysyl-[protein] + L-leucyl-tRNA(Leu) = N-terminal L-leucyl-L-lysyl-[protein] + tRNA(Leu) + H(+). The enzyme catalyses N-terminal L-arginyl-[protein] + L-leucyl-tRNA(Leu) = N-terminal L-leucyl-L-arginyl-[protein] + tRNA(Leu) + H(+). It carries out the reaction L-phenylalanyl-tRNA(Phe) + an N-terminal L-alpha-aminoacyl-[protein] = an N-terminal L-phenylalanyl-L-alpha-aminoacyl-[protein] + tRNA(Phe). Its function is as follows. Functions in the N-end rule pathway of protein degradation where it conjugates Leu, Phe and, less efficiently, Met from aminoacyl-tRNAs to the N-termini of proteins containing an N-terminal arginine or lysine. The protein is Leucyl/phenylalanyl-tRNA--protein transferase of Akkermansia muciniphila (strain ATCC BAA-835 / DSM 22959 / JCM 33894 / BCRC 81048 / CCUG 64013 / CIP 107961 / Muc).